A 443-amino-acid chain; its full sequence is Cyclic GMP-AMP synthase (443 aa).

Ser-61 contacts ATP. Residues Asp-78 and Asp-80 contribute to the active site. Asp-80 is a Mg(2+) binding site. Asn-124 contributes to the ATP binding site. Residue Asp-138 is part of the active site. Asp-138 lines the Mg(2+) pocket. Leu-208 provides a ligand contact to ATP.

It belongs to the CD-NTase family. B06 subfamily. It depends on Mg(2+) as a cofactor.

The enzyme catalyses GTP + ATP = 3',3'-cGAMP + 2 diphosphate. It carries out the reaction UTP + ATP = 3',3'-cUAMP + 2 diphosphate. The catalysed reaction is 2 ATP = 3',3'-c-di-AMP + 2 diphosphate. It catalyses the reaction 2 GTP = 3',3'-c-di-GMP + 2 diphosphate. The enzyme catalyses UTP + GTP = 3',3'-cGMP-UMP + 2 diphosphate. Its function is as follows. Cyclic nucleotide synthase (second messenger synthase) of a CBASS antivirus system. CBASS (cyclic oligonucleotide-based antiphage signaling system) provides immunity against bacteriophages. The CD-NTase protein (CdnB, this protein) synthesizes cyclic nucleotides in response to infection; these serve as specific second messenger signals. The signals activate a diverse range of effectors, leading to bacterial cell death and thus abortive phage infection. The effector protein for this system is membrane protein Cap15. In terms of biological role, catalyzes the synthesis of 3',3'-cyclic GMP-AMP (3'3'-cGAMP) from GTP and ATP, a second messenger in cell signal transduction. Also makes cyclic UMP-AMP, cyclic UMP-GMP, cyclic di-AMP and cyclic-di-GMP. Functionally, protects E.coli against phage infection. When the CBASS operon (cdnB-cap15) is introduced in E.coli MG1655 there is about 100-fold protection against phage T2 and about 10-fold protection against phage T5 and T6. In Escherichia albertii, this protein is Cyclic GMP-AMP synthase.